The chain runs to 432 residues: MDEVAVDLKQALPNVYNNLQVHVDVHQKSNSPATSQDIQSHVMQLLNRHCVVFGDYSWTEFDDSFLMKNIHSISIADTELKLKDRQPIDLSKCKVLIHIFQLNEDGPCVESLEEENEDLVAANHWLLPAADFHGLWDSLIYDSEIKSRLLDYIETAMLFSDKNVDSNLISWNRVVLLHGPPGTGKTSLCKALAQKLTIRLSYRYRYGQLVEINSHSLFSKWFSESGKLVTKMFQKIHELINDKEALVFVLIDEVESLTAARKASRAGTEPSDAIRVVNAVLTQIDHIKRYPNVVILSTSNLTEKIDVAFTDRADIKQYIGPPSPAAIFKIYLSCIEELMKCQIIYPKQQLLTLRDLEIIGFLENNISKLSLQLNEISRKSEGLSGRVLRKLPFLAHALYLQSPTVTIERFLWALSLAVDEQFQERKNFSENI.

ATP is bound at residue 179–186 (GPPGTGKT).

Belongs to the AAA ATPase family. PCH2 subfamily.

Plays a key role in chromosome recombination and chromosome structure development during meiosis. Required at early steps in meiotic recombination that leads to non-crossovers pathways. Also needed for efficient completion of homologous synapsis by influencing crossover distribution along the chromosomes affecting both crossovers and non-crossovers pathways. This chain is Pachytene checkpoint protein 2 homolog (trip13), found in Xenopus tropicalis (Western clawed frog).